The chain runs to 87 residues: MKTFDELWAELSEKARSRPEGSGTVRALDAGVHGIGKKLVEEAAESWMAAEHEGPERAAEEISQLLYHAQVLMLATGIDLDDVYAHL.

The protein belongs to the PRA-PH family.

It is found in the cytoplasm. It carries out the reaction 1-(5-phospho-beta-D-ribosyl)-ATP + H2O = 1-(5-phospho-beta-D-ribosyl)-5'-AMP + diphosphate + H(+). It functions in the pathway amino-acid biosynthesis; L-histidine biosynthesis; L-histidine from 5-phospho-alpha-D-ribose 1-diphosphate: step 2/9. The protein is Phosphoribosyl-ATP pyrophosphatase of Nocardioides sp. (strain ATCC BAA-499 / JS614).